The following is an 81-amino-acid chain: Photosystem I iron-sulfur center (81 aa).

4Fe-4S ferredoxin-type domains follow at residues S2 to W31 and I39 to Y68. [4Fe-4S] cluster is bound by residues C11, C14, C17, C21, C48, C51, C54, and C58.

In terms of assembly, the cyanobacterial PSI reaction center is composed of one copy each of PsaA,B,C,D,E,F,I,J,K,L,M and X, and forms trimeric complexes. The cofactor is [4Fe-4S] cluster.

It is found in the cellular thylakoid membrane. The catalysed reaction is reduced [plastocyanin] + hnu + oxidized [2Fe-2S]-[ferredoxin] = oxidized [plastocyanin] + reduced [2Fe-2S]-[ferredoxin]. Apoprotein for the two 4Fe-4S centers FA and FB of photosystem I (PSI); essential for photochemical activity. FB is the terminal electron acceptor of PSI, donating electrons to ferredoxin. The C-terminus interacts with PsaA/B/D and helps assemble the protein into the PSI complex. Required for binding of PsaD and PsaE to PSI. PSI is a plastocyanin/cytochrome c6-ferredoxin oxidoreductase, converting photonic excitation into a charge separation, which transfers an electron from the donor P700 chlorophyll pair to the spectroscopically characterized acceptors A0, A1, FX, FA and FB in turn. The sequence is that of Photosystem I iron-sulfur center from Mastigocladus laminosus (Fischerella sp.).